The chain runs to 118 residues: cAMP-responsive element-binding protein-like 2 (118 aa).

The tract at residues M1–D25 is disordered. Residues K10–P21 are compositionally biased toward basic residues. The 64-residue stretch at K23–S86 folds into the bZIP domain. Residues K29 to R60 form a basic motif region. The segment at I62–L69 is leucine-zipper.

This sequence belongs to the bZIP family. ATF subfamily.

It is found in the nucleus. Functionally, probable regulator of creb1 transcriptional activity which is involved in adipose cells differentiation. May also play a regulatory role in the cell cycle. This chain is cAMP-responsive element-binding protein-like 2 (crebl2), found in Xenopus tropicalis (Western clawed frog).